An 833-amino-acid polypeptide reads, in one-letter code: Prickle-like protein 1 (833 aa).

The interval 1-22 (MPLEMDQKISKHTFGCQRSSTS) is disordered. One can recognise a PET domain in the interval 14–122 (FGCQRSSTSD…NIKMLSRAVM (109 aa)). LIM zinc-binding domains lie at 124 to 188 (AMCE…ELLK), 189 to 249 (PRCS…HYAE), and 250 to 313 (YCES…EDVH). Disordered regions lie at residues 312–346 (VHAS…ADQC), 432–456 (EDNR…RNSR), 603–702 (CQEK…ERNP), 767–786 (CSSS…QPIP), and 805–833 (NALS…CIIS). 2 stretches are compositionally biased toward basic and acidic residues: residues 432–453 (EDNR…DLQR) and 603–614 (CQEKPPPEEKPM). Residues 669–680 (RPHHHRRRKSRK) show a composition bias toward basic residues. Residues 817–833 (TKSKKKKGHKGKNCIIS) show a composition bias toward basic residues. A Cysteine methyl ester modification is found at Cys830. Cys830 is lipidated: S-farnesyl cysteine. The propeptide at 831–833 (IIS) is removed in mature form.

Belongs to the prickle / espinas / testin family. As to quaternary structure, interacts with dvl2/dsh and mapk8/jnk1.

Its subcellular location is the cell membrane. Functionally, acts in a planar cell polarity (PCP) complex; polarization along the apical/basal axis of epithelial cells. Regulates the polarized assembly of fibronectrin on the surface of the mesoderm during gastrulation. Essential for gastrulation cell movements, cooperating with dvl2/dsh to activate jnk. Acts together with tes to control axial elongation. The polypeptide is Prickle-like protein 1 (Xenopus tropicalis (Western clawed frog)).